The sequence spans 324 residues: Homeobox protein Nkx-2.5 (324 aa).

The homeobox DNA-binding region spans 138–197 (RRKPRVLFSQAQVYELERRFKQQRYLSAPERDQLASVLKLTSTQVKIWFQNRRYKCKRQR).

The protein belongs to the NK-2 homeobox family. As to quaternary structure, homodimer (via the homeobox); binds DNA as homodimer. Interacts (via the homeobox) with TBX5 (via the T-box); this complex binds DNA. Interacts with HIPK1 and HIPK2, but not HIPK3. Interacts with the C-terminal zinc finger of GATA4 through its homeobox domain. Also interacts with JARID2 which represses its ability to activate transcription of ANF. Interacts with FBLIM1. Interacts with TBX18. Interacts with histone methyltransferase NSD2 (via HMG box). Interacts with NEDD9. Interacts with TBX1. Expressed only in the heart.

It localises to the nucleus. In terms of biological role, transcription factor required for the development of the heart and the spleen. During heart development, acts as a transcriptional activator of NPPA/ANF in cooperation with GATA4. May cooperate with TBX2 to negatively modulate expression of NPPA/ANF in the atrioventricular canal. Binds to the core DNA motif of NPPA promoter. Together with PBX1, required for spleen development through a mechanism that involves CDKN2B repression. Positively regulates transcription of genes such as COL3A1 and MMP2, resulting in increased pulmonary endothelial fibrosis in response to hypoxia. This chain is Homeobox protein Nkx-2.5 (NKX2-5), found in Homo sapiens (Human).